The primary structure comprises 88 residues: Small ribosomal subunit protein uS15 (88 aa).

It belongs to the universal ribosomal protein uS15 family. Part of the 30S ribosomal subunit. Forms a bridge to the 50S subunit in the 70S ribosome, contacting the 23S rRNA.

One of the primary rRNA binding proteins, it binds directly to 16S rRNA where it helps nucleate assembly of the platform of the 30S subunit by binding and bridging several RNA helices of the 16S rRNA. Functionally, forms an intersubunit bridge (bridge B4) with the 23S rRNA of the 50S subunit in the ribosome. The polypeptide is Small ribosomal subunit protein uS15 (Finegoldia magna (strain ATCC 29328 / DSM 20472 / WAL 2508) (Peptostreptococcus magnus)).